A 737-amino-acid chain; its full sequence is Alpha-adducin (737 aa).

At methionine 1 the chain carries N-acetylmethionine. Residues 1 to 21 (MNGDSRAAVVTSPPPTTAPHK) form a disordered region. Position 12 is a phosphoserine (serine 12). Serine 59 carries the post-translational modification Phosphoserine; by PKA. Serine 64 is subject to Phosphoserine. Threonine 331 is modified (phosphothreonine). Phosphoserine is present on residues serine 334, serine 353, serine 355, serine 358, and serine 366. Serine 408 carries the post-translational modification Phosphoserine; by PKA. Over residues 419–430 (YSFTSDGDSGTC) the composition is skewed to polar residues. Disordered regions lie at residues 419-490 (YSFT…NLFV) and 576-737 (RREV…KSES). Serine 427 is modified (phosphoserine). Position 429 is a phosphothreonine (threonine 429). Serine 431 carries the post-translational modification Phosphoserine. Phosphoserine; by PKA is present on serine 436. The residue at position 445 (threonine 445) is a Phosphothreonine; by ROCK2. Residues serine 464 and serine 465 each carry the phosphoserine modification. At threonine 480 the chain carries Phosphothreonine; by ROCK2. Serine 481 is subject to Phosphoserine; by PKA. Residues 576–601 (RREVERKQKGSEENLDEAREQKEKSP) are compositionally biased toward basic and acidic residues. Phosphoserine is present on residues serine 586, serine 600, and serine 613. Positions 602 to 614 (PDQPAVPYPPPST) are enriched in pro residues. Threonine 614 carries the phosphothreonine modification. 4 positions are modified to phosphoserine: serine 678, serine 707, serine 710, and serine 714. Residues 687 to 714 (PVAEEAAPSAAEEGAAADPGSDGSPGKS) are compositionally biased toward low complexity. Basic residues predominate over residues 715–737 (PSKKKKKFRTPSFLKKSKKKSES). Residue serine 716 is modified to Phosphoserine; by PKC. The segment at 717-734 (KKKKKFRTPSFLKKSKKK) is interaction with calmodulin. A Phosphoserine; by PKA and PKC modification is found at serine 726.

Belongs to the aldolase class II family. Adducin subfamily. As to quaternary structure, heterodimer of an alpha and a beta subunit or an alpha and a gamma subunit.

It localises to the cytoplasm. It is found in the cytoskeleton. The protein localises to the cell membrane. In terms of biological role, membrane-cytoskeleton-associated protein that promotes the assembly of the spectrin-actin network. Binds to calmodulin. The sequence is that of Alpha-adducin (ADD1) from Pongo abelii (Sumatran orangutan).